The following is a 458-amino-acid chain: MPN domain-containing protein (458 aa).

The tract at residues 1 to 37 (MGSEPPSSPQVVEEGADEEDEELSGAEDADLRSSSGR) is disordered. The segment covering 14-28 (EGADEEDEELSGAED) has biased composition (acidic residues). The 96-residue stretch at 42 to 137 (TRRGITLRVL…QYKTTWLHKY (96 aa)) folds into the RAMA domain. Positions 94, 96, and 116 each coordinate DNA. Positions 147–175 (SEGEDDEMGDDDEEEGKTTIPVEDKNKKS) are disordered. Residues 148–161 (EGEDDEMGDDDEEE) are compositionally biased toward acidic residues. The 136-residue stretch at 229–364 (VAVSSNVLLL…VASTITPFWV (136 aa)) folds into the MPN domain. 3 residues coordinate Zn(2+): histidine 306, histidine 308, and aspartate 319. The JAMM motif motif lies at 306–319 (HSHPRGPALPSLQD).

This sequence belongs to the peptidase M67 family. Post-translationally, degraded following binding to N(6)-methyladenosine methylated DNA (m6A).

Its function is as follows. Probable protease. Acts as a sensor of N(6)-methyladenosine methylation on DNA (m6A): recognizes and binds m6A DNA, leading to its degradation. Binds only double strand DNA (dsDNA) in a sequence-independent manner. The sequence is that of MPN domain-containing protein from Danio rerio (Zebrafish).